A 197-amino-acid polypeptide reads, in one-letter code: FMN-dependent NADH:quinone oxidoreductase 1 (197 aa).

FMN contacts are provided by residues S10, 16-18 (SQS), 93-96 (MYNF), and 137-140 (TRGG).

It belongs to the azoreductase type 1 family. Homodimer. Requires FMN as cofactor.

It carries out the reaction 2 a quinone + NADH + H(+) = 2 a 1,4-benzosemiquinone + NAD(+). The enzyme catalyses N,N-dimethyl-1,4-phenylenediamine + anthranilate + 2 NAD(+) = 2-(4-dimethylaminophenyl)diazenylbenzoate + 2 NADH + 2 H(+). Quinone reductase that provides resistance to thiol-specific stress caused by electrophilic quinones. In terms of biological role, also exhibits azoreductase activity. Catalyzes the reductive cleavage of the azo bond in aromatic azo compounds to the corresponding amines. In Photobacterium profundum (strain SS9), this protein is FMN-dependent NADH:quinone oxidoreductase 1.